The primary structure comprises 75 residues: Rugosin-LK1 (75 aa).

The first 22 residues, 1-22, serve as a signal peptide directing secretion; sequence MFTMKKSLLFLFFLGTISLSFC. Positions 23–40 are excised as a propeptide; sequence EEERSADEDDEGEMTEEE.

In terms of tissue distribution, expressed by the skin glands.

Its subcellular location is the secreted. Has antimicrobial activity against Gram-positive bacteria S.aureus ATCC 2592 (MIC=10.0 uM), S.aureus ATCC 43300 (MIC=15.0 uM) and B.subtilis (MIC=40.0 uM), against Gram-negative bacteria E.coli ML-35P (MIC=10.0 uM), P.aeruginosa PA01 (MIC=5.0 uM) and P.aeruginosa ATCC 27853 (MIC=5.0 uM) and against fungus C.albicans ATCC 2002 (MIC=10.0 uM). The polypeptide is Rugosin-LK1 (Limnonectes kuhlii (Kuhl's Creek frog)).